Reading from the N-terminus, the 997-residue chain is LPS-assembly protein LptD (997 aa).

An N-terminal signal peptide occupies residues 1–27 (MLYSPLYQSIRLILFGALGLSSLTVSA).

It belongs to the LptD family. As to quaternary structure, component of the lipopolysaccharide transport and assembly complex. Interacts with LptE and LptA.

The protein localises to the cell outer membrane. In terms of biological role, together with LptE, is involved in the assembly of lipopolysaccharide (LPS) at the surface of the outer membrane. In Psychrobacter cryohalolentis (strain ATCC BAA-1226 / DSM 17306 / VKM B-2378 / K5), this protein is LPS-assembly protein LptD.